Reading from the N-terminus, the 206-residue chain is ATP-dependent Clp protease proteolytic subunit (206 aa).

Serine 110 functions as the Nucleophile in the catalytic mechanism. Residue histidine 135 is part of the active site.

Belongs to the peptidase S14 family. In terms of assembly, fourteen ClpP subunits assemble into 2 heptameric rings which stack back to back to give a disk-like structure with a central cavity, resembling the structure of eukaryotic proteasomes.

The protein resides in the cytoplasm. The enzyme catalyses Hydrolysis of proteins to small peptides in the presence of ATP and magnesium. alpha-casein is the usual test substrate. In the absence of ATP, only oligopeptides shorter than five residues are hydrolyzed (such as succinyl-Leu-Tyr-|-NHMec, and Leu-Tyr-Leu-|-Tyr-Trp, in which cleavage of the -Tyr-|-Leu- and -Tyr-|-Trp bonds also occurs).. In terms of biological role, cleaves peptides in various proteins in a process that requires ATP hydrolysis. Has a chymotrypsin-like activity. Plays a major role in the degradation of misfolded proteins. This is ATP-dependent Clp protease proteolytic subunit from Edwardsiella ictaluri (strain 93-146).